Reading from the N-terminus, the 256-residue chain is Hydroxyacylglutathione hydrolase (256 aa).

The Zn(2+) site is built by His58, His60, Asp62, His63, His116, Asp135, and His173.

Belongs to the metallo-beta-lactamase superfamily. Glyoxalase II family. In terms of assembly, monomer. The cofactor is Zn(2+).

It carries out the reaction an S-(2-hydroxyacyl)glutathione + H2O = a 2-hydroxy carboxylate + glutathione + H(+). It participates in secondary metabolite metabolism; methylglyoxal degradation; (R)-lactate from methylglyoxal: step 2/2. Its function is as follows. Thiolesterase that catalyzes the hydrolysis of S-D-lactoyl-glutathione to form glutathione and D-lactic acid. This is Hydroxyacylglutathione hydrolase from Hyphomonas neptunium (strain ATCC 15444).